Here is a 1213-residue protein sequence, read N- to C-terminus: Filamin-A-interacting protein 1 (1213 aa).

The disordered stretch occupies residues 1-70 (MRSRNQGGES…TSGECERKTK (70 aa)). Residues 61–70 (TSGECERKTK) are compositionally biased toward basic and acidic residues. Serine 138 carries the phosphoserine modification. Coiled-coil stretches lie at residues 192 to 591 (DYMN…ELSC) and 624 to 781 (PEDN…LSKR). 2 disordered regions span residues 878–900 (NGPS…PGEV) and 949–976 (KPRI…GPER). Composition is skewed to polar residues over residues 880–894 (PSIT…NSSP) and 960–970 (VMPQKQKSGDT). The residue at position 979 (serine 979) is a Phosphoserine. Positions 1103-1213 (VSTGTVLRSP…STTSLGGGKG (111 aa)) are disordered. Low complexity predominate over residues 1125–1138 (VTSTITITPVTTSS). The segment covering 1139–1156 (ARGTQSVSGQDGSSQRPT) has biased composition (polar residues). The span at 1168–1179 (AGKPVVAAPGAG) shows a compositional bias: low complexity.

The protein belongs to the FILIP1 family. Interacts with FLNA. Interacts with RHOD (in GTP-bound form). In terms of tissue distribution, moderately expressed in adult heart and brain. Weakly expressed in lung, skeletal muscle, ovary, testis, kidney, and fetal brain, and hardly detectable in liver, pancreas, spleen, and fetal liver. Within brain, moderate expression is found in amygdala and caudate nucleus. Expressed in skin fibroblasts.

It localises to the cytoplasm. The protein resides in the cytoskeleton. In terms of biological role, by acting through a filamin-A/F-actin axis, it controls the start of neocortical cell migration from the ventricular zone. May be able to induce the degradation of filamin-A. The chain is Filamin-A-interacting protein 1 (FILIP1) from Homo sapiens (Human).